The chain runs to 591 residues: Parathyroid hormone/parathyroid hormone-related peptide receptor (591 aa).

An N-terminal signal peptide occupies residues 1 to 26 (MGTARIAPSLALLLCCPVLSSAYALV). Topologically, residues 27-188 (DADDVFTKEE…REREVFDRLG (162 aa)) are extracellular. 3 cysteine pairs are disulfide-bonded: C48–C117, C108–C148, and C131–C170. Residues 67 to 104 (KGWTPASTSGKPRKEKAPGKFYPESKENKDVPTGSRRR) form a disordered region. A compositionally biased stretch (basic and acidic residues) spans 81–96 (EKAPGKFYPESKENKD). N-linked (GlcNAc...) asparagine glycans are attached at residues N151, N161, N166, and N176. The helical transmembrane segment at 189-212 (MIYTVGYSMSLASLTVAVLILAYF) threads the bilayer. Residues 213-219 (RRLHCTR) are Cytoplasmic-facing. A helical transmembrane segment spans residues 220-239 (NYIHMHMFLSFMLRAASIFV). The Extracellular segment spans residues 240 to 282 (KDAVLYSGFTLDEAERLTEEELHIIAQVPPPPAAAAVGYAGCR). The helical transmembrane segment at 283-306 (VAVTFFLYFLATNYYWILVEGLYL) threads the bilayer. Residues 307 to 320 (HSLIFMAFFSEKKY) lie on the Cytoplasmic side of the membrane. The helical transmembrane segment at 321-342 (LWGFTIFGWGLPAVFVAVWVGV) threads the bilayer. Over 343–361 (RATLANTGCWDLSSGHKKW) the chain is Extracellular. The helical transmembrane segment at 362-382 (IIQVPILASVVLNFILFINII) threads the bilayer. The Cytoplasmic portion of the chain corresponds to 383-409 (RVLATKLRETNAGRCDTRQQYRKLLRS). The chain crosses the membrane as a helical span at residues 410–428 (TLVLVPLFGVHYTVFMALP). Residues 429-440 (YTEVSGTLWQIQ) lie on the Extracellular side of the membrane. A helical transmembrane segment spans residues 441–463 (MHYEMLFNSFQGFFVAIIYCFCN). The Cytoplasmic segment spans residues 464–591 (GEVQAEIRKS…LLQEEWETVM (128 aa)). Residues 474 to 477 (WSRW) carry the Important for interaction with G proteins motif.

Belongs to the G-protein coupled receptor 2 family. As to quaternary structure, homodimer in the absence of bound ligand. Peptide hormone binding leads to dissociation of the homodimer. N-glycosylated. As to expression, detected in kidney.

It is found in the cell membrane. G-protein-coupled receptor for parathyroid hormone (PTH) and for parathyroid hormone-related peptide (PTHLH). Ligand binding causes a conformation change that triggers signaling via guanine nucleotide-binding proteins (G proteins) and modulates the activity of downstream effectors, such as adenylate cyclase (cAMP). PTH1R is coupled to G(s) G alpha proteins and mediates activation of adenylate cyclase activity. PTHLH dissociates from PTH1R more rapidly than PTH; as consequence, the cAMP response induced by PTHLH decays faster than the response induced by PTH. This chain is Parathyroid hormone/parathyroid hormone-related peptide receptor (Pth1r), found in Mus musculus (Mouse).